A 241-amino-acid polypeptide reads, in one-letter code: Adenosylcobinamide-GDP ribazoletransferase (241 aa).

5 helical membrane-spanning segments follow: residues 24 to 44, 48 to 68, 103 to 123, 175 to 195, and 218 to 238; these read IVFFFTITGAITGLMAASIFY, FINQLLASVASVSFLIIIYGF, VVTFFIIYIITISLLSSFNSI, VIILIFLIFYKYIIFTMFSLI, and IIGFTGELSRLISLLLILISF.

This sequence belongs to the CobS family. The cofactor is Mg(2+).

It localises to the cell membrane. It catalyses the reaction alpha-ribazole + adenosylcob(III)inamide-GDP = adenosylcob(III)alamin + GMP + H(+). It carries out the reaction alpha-ribazole 5'-phosphate + adenosylcob(III)inamide-GDP = adenosylcob(III)alamin 5'-phosphate + GMP + H(+). Its pathway is cofactor biosynthesis; adenosylcobalamin biosynthesis; adenosylcobalamin from cob(II)yrinate a,c-diamide: step 7/7. Its function is as follows. Joins adenosylcobinamide-GDP and alpha-ribazole to generate adenosylcobalamin (Ado-cobalamin). Also synthesizes adenosylcobalamin 5'-phosphate from adenosylcobinamide-GDP and alpha-ribazole 5'-phosphate. This chain is Adenosylcobinamide-GDP ribazoletransferase, found in Picrophilus torridus (strain ATCC 700027 / DSM 9790 / JCM 10055 / NBRC 100828 / KAW 2/3).